The following is a 304-amino-acid chain: Ribonuclease BN (304 aa).

Histidine 63, histidine 65, aspartate 67, histidine 68, histidine 140, aspartate 211, and histidine 269 together coordinate Zn(2+). Aspartate 67 acts as the Proton acceptor in catalysis.

Belongs to the RNase Z family. RNase BN subfamily. As to quaternary structure, homodimer. Requires Zn(2+) as cofactor.

Zinc phosphodiesterase, which has both exoribonuclease and endoribonuclease activities. This chain is Ribonuclease BN, found in Cronobacter sakazakii (strain ATCC BAA-894) (Enterobacter sakazakii).